Reading from the N-terminus, the 435-residue chain is UDP-N-acetylmuramate--L-alanine ligase (435 aa).

108–114 lines the ATP pocket; sequence GAHGKST.

The protein belongs to the MurCDEF family.

It is found in the cytoplasm. It carries out the reaction UDP-N-acetyl-alpha-D-muramate + L-alanine + ATP = UDP-N-acetyl-alpha-D-muramoyl-L-alanine + ADP + phosphate + H(+). The protein operates within cell wall biogenesis; peptidoglycan biosynthesis. Functionally, cell wall formation. In Campylobacter curvus (strain 525.92), this protein is UDP-N-acetylmuramate--L-alanine ligase.